Reading from the N-terminus, the 276-residue chain is MRRLKSDWKLSTETREPGARPALLQARMILRLIALALVTGHVGGETRIIKGYECRPHSQPWQVALFQKTRLLCGATLIAPKWLLTAAHCRKPHYVILLGEHNLEKTDGCEQRRMATESFPHPDFNNSLPNKDHRNDIMLVKMSSPVFFTRAVQPLTLSPHCVAAGTSCLISGWGTTSSPQLRLPHSLRCANVSIIEHKECEKAYPGNITDTMLCASVRKEGKDSCQGDSGGPLVCNGSLQGIISWGQDPCAVTRKPGVYTKVCKYFNWIHEVMRNN.

Positions 1–44 (MRRLKSDWKLSTETREPGARPALLQARMILRLIALALVTGHVGG) are cleaved as a signal peptide. Positions 45 to 47 (ETR) are cleaved as a propeptide — activation peptide. One can recognise a Peptidase S1 domain in the interval 48-274 (IIKGYECRPH…YFNWIHEVMR (227 aa)). 5 disulfide bridges follow: Cys-54/Cys-189, Cys-73/Cys-89, Cys-168/Cys-235, Cys-200/Cys-214, and Cys-225/Cys-250. The active-site Charge relay system is His-88. A glycan (N-linked (GlcNAc...) asparagine) is linked at Asn-125. Catalysis depends on Asp-136, which acts as the Charge relay system. Asn-191 and Asn-207 each carry an N-linked (GlcNAc...) asparagine glycan. Catalysis depends on Ser-229, which acts as the Charge relay system. N-linked (GlcNAc...) asparagine glycosylation occurs at Asn-236.

This sequence belongs to the peptidase S1 family. Kallikrein subfamily. As to expression, expressed in brain and prostate (isoform 1) and prostate (isoform 2).

The protein resides in the secreted. In terms of biological role, possible multifunctional protease. Efficiently cleaves 'bz-Phe-Arg-4-methylcoumaryl-7-amide', a kallikrein substrate, and weakly cleaves other substrates for kallikrein and trypsin. This is Kallikrein-11 (Klk11) from Mus musculus (Mouse).